Consider the following 797-residue polypeptide: Plakophilin-3 (797 aa).

Positions 58 to 81 (GQQSRHNGSAELDGSAESARGMPR) are disordered. Omega-N-methylarginine is present on Arg81. 3 positions are modified to phosphoserine: Ser123, Ser180, and Ser183. The residue at position 195 (Tyr195) is a Phosphotyrosine. Low complexity predominate over residues 219 to 228 (ASSGSSRAGG). The tract at residues 219 to 241 (ASSGSSRAGGLDWPEATEGPPSR) is disordered. Residue Ser240 is modified to Phosphoserine. Thr250 carries the phosphothreonine modification. The tract at residues 253 to 274 (RFQSSHRSRGGTGSVSGAGLEP) is disordered. Residue Arg261 is modified to Omega-N-methylarginine. The interval 283-288 (SLSLSL) is required for interaction with SFN. Residues Ser285, Ser313, Ser314, and Ser331 each carry the phosphoserine modification. The interval 294 to 724 (LPDVRGLDSY…AEVLVNIIAV (431 aa)) is required for interaction with GSK3B. 8 ARM repeats span residues 305–348 (GHRT…HRCY), 351–390 (AAAKKQARSLQAVPRLVKLFNHANQEVQRHATGAMRNLIY), 393–432 (VDNKLALVEENGIFELLRTLREQDDELRKNVTGILWNLSS), 449–487 (TDLVLSPLSGAGGPPLIQQNASEAEIFYNATGFLRNLSS), 491–536 (ATRQ…NLSY), 596–637 (PKGL…NITA), 645–684 (VLSRLALEQERILNPLLDRVRTADHNQLRSLTGLIRNLSR), and 689–730 (KDEM…NLVV). The interval 516 to 797 (VGKCEDKSVE…GYRKEDFLGP (282 aa)) is required for binding to PKP2 mRNA.

Belongs to the beta-catenin family. Found in a complex composed of CDH1, RAP1A and PKP3; PKP3 acts as a scaffold protein within the complex, the complex is required for CDH1 localization to mature desmosome cell junctions. Interacts with FXR1; the interaction facilitates the binding of PKP3 to PKP2 mRNA. Interacts (via ARM repeats) with GSK3B; the interaction may be involved in PKP3 protein degradation. Interacts with hyperphosphorylated and hypophosphorylated RB1; the interaction inhibits RB1 interaction with and repression of the transcription factor E2F1, potentially via sequestering RB1 to the cytoplasm. Interacts with CDKN1A; the interaction sequesters CDKN1A to the cytoplasm thereby repressing its role as an inhibitor of CDK4- and CDK6-driven RB1 phosphorylation. Interacts (via N-terminus) with SFN; the interaction maintains the cytoplasmic pool of PKP3, facilitates PKP3 exchange at desmosomes and restricts PKP3 localization to existing desmosome cell junctions. Interacts (via N-terminus) with JUP; the interaction is required for PKP3 localization to desmosome cell-cell junctions. Phosphorylated at Ser-285 when localized to the cytoplasm, PKP3 at desmosome cell junctions is not phosphorylated. Phosphorylation at Try-195 by SRC is induced by reactive oxygen species and potentially acts as a release mechanism from desmosome cell-cell junctions. As to expression, expressed in all layers of the epidermis, but is most abundant in the basal layer (at protein level). Expressed in keratinocytes of the epidermis at birth (at protein level). Expressed in the anagen non-keratinized inner root sheath cuticle and hair cuticle (at protein level). Also expressed in the matrix, precursors of the inner root sheath and hair shaft lineages (at protein level). Expressed at apical membranes in the outer hair root sheath and basal layer keratinocytes (at protein level). Expressed in intestinal epithelial cells and lamina propria of the ileum (at protein level). Expressed in keratinocytes (at protein level).

It localises to the nucleus. The protein localises to the cell junction. Its subcellular location is the desmosome. It is found in the cytoplasm. The protein resides in the cell membrane. It localises to the adherens junction. Functionally, a component of desmosome cell-cell junctions which are required for positive regulation of cellular adhesion. Required for the localization of DSG2, DSP and PKP2 to mature desmosome junctions. May also play a role in the maintenance of DSG3 protein abundance in keratinocytes. Required for the formation of DSP-containing desmosome precursors in the cytoplasm during desmosome assembly. Also regulates the accumulation of CDH1 to mature desmosome junctions, via cAMP-dependent signaling and its interaction with activated RAP1A. Positively regulates the stabilization of PKP2 mRNA and therefore protein abundance, via its interaction with FXR1, may also regulate the protein abundance of DSP via the same mechanism. May also regulate the protein abundance of the desmosome component PKP1. Required for the organization of desmosome junctions at intercellular borders between basal keratinocytes of the epidermis, as a result plays a role in maintenance of the dermal barrier and regulation of the dermal inflammatory response. Required during epidermal keratinocyte differentiation for cell adherence at tricellular cell-cell contacts, via regulation of the timely formation of adherens junctions and desmosomes in a calcium-dependent manner, and may also play a role in the organization of the intracellular actin fiber belt. Acts as a negative regulator of the inflammatory response in hematopoietic cells of the skin and intestine, via modulation of proinflammatory cytokine production. Important for epithelial barrier maintenance in the intestine to reduce intestinal permeability, thereby plays a role in protection from intestinal-derived endotoxemia. Required for the development of hair follicles, via a role in the regulation of inner root sheaf length, correct alignment and anterior-posterior polarity of hair follicles. Promotes proliferation and cell-cycle G1/S phase transition of keratinocytes. Promotes E2F1-driven transcription of G1/S phase promoting genes by acting to release E2F1 from its inhibitory interaction with RB1, via sequestering RB1 and CDKN1A to the cytoplasm and thereby increasing CDK4- and CDK6-driven phosphorylation of RB1. May act as a scaffold protein to facilitate MAPK phosphorylation of RPS6KA protein family members and subsequently promote downstream EGFR signaling. May play a role in the positive regulation of transcription of Wnt-mediated TCF-responsive target genes. This chain is Plakophilin-3 (Pkp3), found in Mus musculus (Mouse).